The following is a 122-amino-acid chain: Large ribosomal subunit protein bL12 (122 aa).

It belongs to the bacterial ribosomal protein bL12 family. As to quaternary structure, homodimer. Part of the ribosomal stalk of the 50S ribosomal subunit. Forms a multimeric L10(L12)X complex, where L10 forms an elongated spine to which 2 to 4 L12 dimers bind in a sequential fashion. Binds GTP-bound translation factors.

Forms part of the ribosomal stalk which helps the ribosome interact with GTP-bound translation factors. Is thus essential for accurate translation. This chain is Large ribosomal subunit protein bL12, found in Buchnera aphidicola subsp. Baizongia pistaciae (strain Bp).